The sequence spans 1035 residues: Potassium-transporting ATPase alpha chain 1 (1035 aa).

The interval 1–41 (MGKADNYELYSVELGPGPGGDMAAKMSKKKKAGGGGGKRKE) is disordered. Over 1 to 98 (MGKADNYELY…NALRPPRGTP (98 aa)) the chain is Cytoplasmic. Phosphotyrosine occurs at positions 7 and 10. The span at 26–40 (MSKKKKAGGGGGKRK) shows a compositional bias: basic residues. Ser-27 carries the phosphoserine modification. The helical transmembrane segment at 99-119 (EYVKFARQLAGGLQCLMWVAA) threads the bilayer. Residues 120–142 (AICLIAFAIQASEGDLTTDDNLY) lie on the Lumenal side of the membrane. A helical transmembrane segment spans residues 143–163 (LALALIAVVVVTGCFGYYQEF). Over 164 to 299 (KSTNIIASFK…NEKTPIAIEI (136 aa)) the chain is Cytoplasmic. A helical membrane pass occupies residues 300–319 (EHFVDIIAGLAILFGATFFV). The Lumenal portion of the chain corresponds to 320–331 (VAMCIGYTFLRA). Residues 332–349 (MVFFMAIVVAYVPEGLLA) traverse the membrane as a helical segment. Residues Val-340, Ala-341, Val-343, and Glu-345 each contribute to the K(+) site. At 350–783 (TVTVCLSLTA…EQGRLIFDNL (434 aa)) the chain is on the cytoplasmic side. Asp-387 acts as the 4-aspartylphosphate intermediate in catalysis. 2 residues coordinate Mg(2+): Asp-387 and Thr-389. Phosphoserine is present on residues Ser-463 and Ser-601. The Mg(2+) site is built by Asp-728 and Asp-732. The chain crosses the membrane as a helical span at residues 784–803 (KKSIAYTLTKNIPELTPYLI). Residue Glu-797 participates in K(+) binding. At 804 to 813 (YITVSVPLPL) the chain is on the lumenal side. A helical transmembrane segment spans residues 814 to 834 (GCITILFIELCTDIFPSVSLA). Glu-822 is a K(+) binding site. The Cytoplasmic portion of the chain corresponds to 835 to 854 (YEKAESDIMHLRPRNPKRDR). At Ser-840 the chain carries Phosphoserine. Residues 855–877 (LVNEPLAAYSYFQIGAIQSFAGF) form a helical membrane-spanning segment. Over 878 to 929 (TDYFTAMAQEGWFPLLCVGLRPQWEDHHLQDLQDSYGQEWTFGQRLYQQYTC) the chain is Lumenal. A helical transmembrane segment spans residues 930 to 949 (YTVFFISIEMCQIADVLIRK). Over 950–963 (TRRLSAFQQGFFRN) the chain is Cytoplasmic. Phosphoserine; by PKA is present on Ser-954. Residues 964-982 (RILVIAIVFQVCIGCFLCY) traverse the membrane as a helical segment. The Lumenal segment spans residues 983–997 (CPGMPNIFNFMPIRF). The chain crosses the membrane as a helical span at residues 998 to 1018 (QWWLVPMPFGLLIFVYDEIRK). Over 1019–1035 (LGVRCCPGSWWDQELYY) the chain is Cytoplasmic.

The protein belongs to the cation transport ATPase (P-type) (TC 3.A.3) family. Type IIC subfamily. As to quaternary structure, the gastric H(+)/K(+) ATPase pump is composed of the catalytic alpha subunit ATP4A and the regulatory beta subunit ATP4B. Interacts (via the P-domain) with ATP4B (via N-terminus); this interaction stabilizes the lumenal-open E2 conformation state and prevents the reverse reaction of the transport cycle.

The protein resides in the apical cell membrane. Its subcellular location is the cell membrane. The catalysed reaction is K(+)(out) + ATP + H2O + H(+)(in) = K(+)(in) + ADP + phosphate + 2 H(+)(out). The catalytic subunit of the gastric H(+)/K(+) ATPase pump which transports H(+) ions in exchange for K(+) ions across the apical membrane of parietal cells. Uses ATP as an energy source to pump H(+) ions to the gastric lumen while transporting K(+) ion from the lumen into the cell. Remarkably generates a million-fold proton gradient across the gastric parietal cell membrane, acidifying the gastric juice down to pH 1. Within a transport cycle, the transfer of a H(+) ion across the membrane is coupled to ATP hydrolysis and is associated with a transient phosphorylation that shifts the pump conformation from inward-facing (E1) to outward-facing state (E2). The release of the H(+) ion in the stomach lumen is followed by binding of K(+) ion converting the pump conformation back to the E1 state. The polypeptide is Potassium-transporting ATPase alpha chain 1 (ATP4A) (Oryctolagus cuniculus (Rabbit)).